Reading from the N-terminus, the 801-residue chain is Protein 4.1 (801 aa).

Positions 1–187 (MTTEKGLLAE…GESKASHKVV (187 aa)) are disordered. The span at 45-58 (EQSQESPSTTSPST) shows a compositional bias: low complexity. Basic and acidic residues predominate over residues 88–107 (SDEKEVELLGEKGQDQKDVD). Residues 108–117 (EGLGEQLEDD) show a composition bias toward acidic residues. Residues 141–151 (SLSSAETQPAQ) show a composition bias toward polar residues. Residues 154-166 (QKEDQDPEADCED) are compositionally biased toward acidic residues. Residues 167-182 (VEGKEPIKKPEGESKA) are compositionally biased toward basic and acidic residues. The region spanning 193-474 (MRCKVTLLDD…EHHTFFRLTS (282 aa)) is the FERM domain. The interval 477-587 (SIPKHRFLSL…GMPNQRESPK (111 aa)) is hydrophilic. Residues 516 to 613 (RTGSKRASRS…DKVKDLEKTQ (98 aa)) form a disordered region. A compositionally biased stretch (basic and acidic residues) spans 563-577 (RVEEMPKKTEEKPKE). The interval 588 to 651 (DVKATQQDSP…WDKRLSTHSP (64 aa)) is spectrin--actin-binding. Residues 591–601 (ATQQDSPSPTV) show a composition bias toward polar residues. Basic and acidic residues predominate over residues 604–613 (DKVKDLEKTQ). The tract at residues 653-801 (RTLSFNGQVQ…GVVHQETEIA (149 aa)) is C-terminal (CTD).

As to quaternary structure, binds with a high affinity to glycophorin and with lower affinity to band III protein. Associates with the nuclear mitotic apparatus. Binds calmodulin. In terms of processing, phosphorylated at multiple sites by different protein kinases and each phosphorylation event selectively modulates the protein's functions. In terms of tissue distribution, found exclusively in photoreceptors following the terminal mitosis of retinal neurons. When retinal synaptogenesis is complete, protein 4.1 is also expressed in the inner retina. In adult amphibian retinas, protein 4.1 is detected in photoreceptors, bipolar cells, and ganglion cell axons.

Its subcellular location is the nucleus. It localises to the cytoplasm. It is found in the cytoskeleton. The protein resides in the cell cortex. Functionally, protein 4.1 is a major structural element of the erythrocyte membrane skeleton. It plays a key role in regulating membrane physical properties of mechanical stability and deformability by stabilizing spectrin-actin interaction. May be required for dynein-dynactin complex and NUMA1 recruitment at the mitotic cell cortex during anaphase. The polypeptide is Protein 4.1 (Xenopus laevis (African clawed frog)).